The following is a 135-amino-acid chain: DNA-binding protein inhibitor ID-2-B (135 aa).

In terms of domain architecture, bHLH spans 23–75; sequence ARSKAPVDEPMSLLYNMNDCYSKLKELVPSIPPNKKVSKMEILQHVIDYILDL. The Nuclear export signal signature appears at 108–117; it reads LNTDISILSL.

Heterodimer with other HLH proteins.

The protein resides in the cytoplasm. It is found in the nucleus. In terms of biological role, transcriptional regulator (lacking a basic DNA binding domain) which negatively regulates the basic helix-loop-helix (bHLH) transcription factors by forming heterodimers and inhibiting their DNA binding and transcriptional activity. Inhibits the activity of both neurogenic (neurod1/neuroD) and myogenic (myod1/myoD) bHLH factors. May play a role in the regulation of the circadian clock. In Xenopus laevis (African clawed frog), this protein is DNA-binding protein inhibitor ID-2-B (id2-b).